The sequence spans 86 residues: Anti-adapter protein IraP (86 aa).

The stretch at 1–36 (MKNLIAELLLKLAQKEEESKELCAQVEALEIIVTAM) forms a coiled coil.

This sequence belongs to the IraP family. In terms of assembly, interacts with RssB.

The protein localises to the cytoplasm. Its function is as follows. Inhibits RpoS proteolysis by regulating RssB activity, thereby increasing the stability of the sigma stress factor RpoS especially during phosphate starvation, but also in stationary phase and during nitrogen starvation. Its effect on RpoS stability is due to its interaction with RssB, which probably blocks the interaction of RssB with RpoS, and the consequent delivery of the RssB-RpoS complex to the ClpXP protein degradation pathway. The chain is Anti-adapter protein IraP from Shigella boydii serotype 18 (strain CDC 3083-94 / BS512).